A 286-amino-acid polypeptide reads, in one-letter code: Homoserine kinase (286 aa).

Position 78-88 (P78–S88) interacts with ATP.

Belongs to the GHMP kinase family. Homoserine kinase subfamily.

The protein localises to the cytoplasm. It carries out the reaction L-homoserine + ATP = O-phospho-L-homoserine + ADP + H(+). It participates in amino-acid biosynthesis; L-threonine biosynthesis; L-threonine from L-aspartate: step 4/5. Its function is as follows. Catalyzes the ATP-dependent phosphorylation of L-homoserine to L-homoserine phosphate. The sequence is that of Homoserine kinase from Limosilactobacillus fermentum (strain NBRC 3956 / LMG 18251) (Lactobacillus fermentum).